Consider the following 153-residue polypeptide: Ribonuclease 2 (153 aa).

The protein belongs to the BetVI family.

It localises to the cytoplasm. Functionally, catalyzes the two-stage endonucleolytic cleavage to 3'-phosphomononucleotides and 3'-phosphooligonucleotides with 2',3'-cyclic phosphate intermediates. This is Ribonuclease 2 from Panax ginseng (Korean ginseng).